A 287-amino-acid chain; its full sequence is Prepilin leader peptidase/N-methyltransferase (287 aa).

A helical transmembrane segment spans residues 12-32 (FMYLVVGLFSLAVGSLLNVII). C71, C74, C96, and C99 together coordinate Zn(2+). Helical transmembrane passes span 127–147 (FTIQ…LVFI), 158–178 (LTLG…FVSL), 182–202 (VLSC…FYLM), 215–235 (LFAA…LLIS), and 259–279 (PFGP…DSII).

This sequence belongs to the peptidase A24 family. Zn(2+) is required as a cofactor.

It is found in the cell inner membrane. The catalysed reaction is Typically cleaves a -Gly-|-Phe- bond to release an N-terminal, basic peptide of 5-8 residues from type IV prepilin, and then N-methylates the new N-terminal amino group, the methyl donor being S-adenosyl-L-methionine.. Its function is as follows. Plays an essential role in type IV pili and type II pseudopili formation by proteolytically removing the leader sequence from substrate proteins and subsequently monomethylating the alpha-amino group of the newly exposed N-terminal phenylalanine. The polypeptide is Prepilin leader peptidase/N-methyltransferase (pilD) (Legionella pneumophila).